The following is a 138-amino-acid chain: Small ribosomal subunit protein bS6 (138 aa).

Residues 100–138 (SPLAKGREEDDSDSSARRARDDSDDDGDDDEDDRRASAD) form a disordered region. The segment covering 121–131 (DSDDDGDDDED) has biased composition (acidic residues).

It belongs to the bacterial ribosomal protein bS6 family.

Functionally, binds together with bS18 to 16S ribosomal RNA. This chain is Small ribosomal subunit protein bS6, found in Thioalkalivibrio sulfidiphilus (strain HL-EbGR7).